The chain runs to 265 residues: Small ribosomal subunit protein uS2 (265 aa).

This sequence belongs to the universal ribosomal protein uS2 family.

This Aliarcobacter butzleri (strain RM4018) (Arcobacter butzleri) protein is Small ribosomal subunit protein uS2.